The primary structure comprises 398 residues: Arylacetamide deacetylase (398 aa).

Residues 1-5 lie on the Cytoplasmic side of the membrane; the sequence is MGRTI. Residues 6–26 traverse the membrane as a helical; Signal-anchor for type II membrane protein segment; sequence FLLISVVLVAYYIYIPLPDDI. Residues 27-398 lie on the Lumenal side of the membrane; it reads EEPWKIILGN…QYLNWLHKNL (372 aa). N-linked (GlcNAc...) asparagine glycosylation occurs at asparagine 77. Positions 110-112 match the Involved in the stabilization of the negatively charged intermediate by the formation of the oxyanion hole motif; the sequence is HGG. Cysteine 115 and cysteine 339 are oxidised to a cystine. The active site involves serine 188. Residues asparagine 192, asparagine 281, and asparagine 324 are each glycosylated (N-linked (GlcNAc...) asparagine). Catalysis depends on residues aspartate 342 and histidine 372.

It belongs to the 'GDXG' lipolytic enzyme family. Highest levels in liver with lower levels in jejunum, kidney and testis.

The protein localises to the endoplasmic reticulum membrane. Its subcellular location is the microsome membrane. The catalysed reaction is a triacylglycerol + H2O = a diacylglycerol + a fatty acid + H(+). Functionally, displays cellular triglyceride lipase activity in liver, increases the levels of intracellular fatty acids derived from the hydrolysis of newly formed triglyceride stores and plays a role in very low-density lipoprotein assembly. Displays serine esterase activity in liver. Deacetylates a variety of arylacetamide substrates, including xenobiotic compounds and procarcinogens, converting them to the primary arylamide compounds and increasing their toxicity. In Rattus norvegicus (Rat), this protein is Arylacetamide deacetylase (Aadac).